We begin with the raw amino-acid sequence, 795 residues long: Phenylalanine--tRNA ligase beta subunit (795 aa).

The 110-residue stretch at 39–148 (KSEFHGVVVG…KETLVGINVY (110 aa)) folds into the tRNA-binding domain. One can recognise a B5 domain in the interval 400–475 (HKNNTIRLHH…RIYEYNNVHL (76 aa)). The Mg(2+) site is built by aspartate 453, aspartate 459, and aspartate 463. In terms of domain architecture, FDX-ACB spans 701–794 (SKFPTVRRDI…LQKKFQAVLR (94 aa)).

It belongs to the phenylalanyl-tRNA synthetase beta subunit family. Type 1 subfamily. Tetramer of two alpha and two beta subunits. Mg(2+) is required as a cofactor.

It is found in the cytoplasm. It catalyses the reaction tRNA(Phe) + L-phenylalanine + ATP = L-phenylalanyl-tRNA(Phe) + AMP + diphosphate + H(+). This chain is Phenylalanine--tRNA ligase beta subunit (pheT), found in Buchnera aphidicola subsp. Acyrthosiphon pisum (strain APS) (Acyrthosiphon pisum symbiotic bacterium).